The following is a 1671-amino-acid chain: Fatty acid synthase alpha subunit aflA (1671 aa).

The disordered stretch occupies residues 40–60 (ITEEAPTEQPPLSTPPSLPQT). Residues 47 to 58 (EQPPLSTPPSLP) show a composition bias toward pro residues. Positions 75–153 (DVALSRVQIV…DANPTVQLGK (79 aa)) constitute a Carrier domain. At Ser113 the chain carries O-(pantetheine 4'-phosphoryl)serine. Residues 492-729 (GKTFLVTGAG…AMLLTPDFVA (238 aa)) are ketoreductase (KR) domain. The Ketosynthase family 3 (KS3) domain maps to 926 to 1428 (MEVLQEVAVE…QKGGQVVGVA (503 aa)). Cys1113 acts as the For beta-ketoacyl synthase activity in catalysis. Positions 1244–1270 (SMISVTSRPSSRSSTSSEVSDKSSLTS) are enriched in low complexity. A disordered region spans residues 1244–1288 (SMISVTSRPSSRSSTSSEVSDKSSLTSITSISNPAPRAQRARSTT). Catalysis depends on for beta-ketoacyl synthase activity residues His1313 and His1354. The disordered stretch occupies residues 1497-1521 (PSTGQYRFRSDATPALDDDALPPPG). Asp1552 contributes to the Mg(2+) binding site. Acetyl-CoA-binding positions include 1552–1554 (DLV), 1598–1608 (EAVFKCLQTHS), 1622–1625 (HGGN), and 1652–1654 (ISY). Ser1653 contributes to the Mg(2+) binding site.

This sequence belongs to the thiolase-like superfamily. Fungal fatty acid synthetase subunit alpha family. [Alpha(6)beta(6)] hexamers of two multifunctional subunits (alpha and beta). Post-translationally, 4'-phosphopantetheine is transferred from CoA to a specific serine of the acyl carrier domain by the C-terminal PPT domain. This modification is essential for activity because fatty acids are bound in thioester linkage to the sulfhydryl of the prosthetic group.

It catalyses the reaction acetyl-CoA + n malonyl-CoA + 2n NADPH + 4n H(+) = a long-chain-acyl-CoA + n CoA + n CO2 + 2n NADP(+).. The catalysed reaction is a fatty acyl-[ACP] + malonyl-[ACP] + H(+) = a 3-oxoacyl-[ACP] + holo-[ACP] + CO2. It carries out the reaction a (3R)-hydroxyacyl-[ACP] + NADP(+) = a 3-oxoacyl-[ACP] + NADPH + H(+). Its pathway is mycotoxin biosynthesis; aflatoxin biosynthesis. In terms of biological role, fatty acid synthase alpha subunit; part of the gene cluster that mediates the biosynthesis of aflatoxins, a group of polyketide-derived furanocoumarins, and part of the most toxic and carcinogenic compounds among the known mycotoxins. The four major aflatoxins produced by A.parasiticus are aflatoxin B1 (AFB1), aflatoxin B2 (AFB2), aflatoxin G1 (AFG1) and aflatoxin G2 (AFG2). Within the aflatoxin pathway, the fungal fatty acid synthase aflA/aflB provides the hexanoyl starter unit to the acyl-carrier protein (ACP) domain of the norsolorinic acid synthase to allow the first step of the pathway. The biosynthesis of aflatoxins begins with the norsolorinic acid synthase aflC that combines a hexanoyl starter unit produced by the fatty acid synthase aflA/aflB and 7 malonyl-CoA extender units to synthesize the precursor NOR. The second step is the conversion of NOR to averantin (AVN) and requires the norsolorinic acid ketoreductase aflD, which catalyzes the dehydration of norsolorinic acid to form (1'S)-averantin. The norsolorinic acid reductases aflE and aflF may also play a role in the conversion of NOR to AVN. The cytochrome P450 monooxygenase aflG then catalyzes the hydroxylation of AVN to 5'hydroxyaverantin (HAVN). The next step is performed by the 5'-hydroxyaverantin dehydrogenase aflH that transforms HAVN to 5'-oxoaverantin (OAVN) which is further converted to averufin (AVF) by aflK that plays a dual role in the pathway, as a 5'-oxoaverantin cyclase that mediates conversion of 5'-oxoaverantin, as well as a versicolorin B synthase in a later step in the pathway. The averufin oxidase aflI catalyzes the conversion of AVF to versiconal hemiacetal acetate (VHA). VHA is then the substrate for the versiconal hemiacetal acetate esterase aflJ to yield versiconal (VAL). Versicolorin B synthase aflK then converts VAL to versicolorin B (VERB) by closing the bisfuran ring of aflatoxin which is required for DNA-binding, thus giving to aflatoxin its activity as a mutagen. Then, the activity of the versicolorin B desaturase aflL leads to versicolorin A (VERA). A branch point starts from VERB since it can also be converted to dihydrodemethylsterigmatocystin (DMDHST), probably also by aflL, VERA being a precursor for aflatoxins B1 and G1, and DMDHST for aflatoxins B2 and G2. Next, the versicolorin reductase aflM and the cytochrome P450 monooxygenase aflN are involved in conversion of VERA to demethylsterigmatocystin (DMST). AflX and aflY seem also involved in this step, through probable aflX-mediated epoxide ring-opening step following versicolorin A oxidation and aflY-mediated Baeyer-Villiger oxidation required for the formation of the xanthone ring. The methyltransferase aflO then leads to the modification of DMST to sterigmatocystin (ST), and of DMDHST to dihydrosterigmatocystin (DHST). Both ST and DHST are then substrates of the O-methyltransferase aflP to yield O-methylsterigmatocystin (OMST) and dihydro-O-methylsterigmatocystin (DHOMST), respectively. Finally OMST is converted to aflatoxins B1 and G1, and DHOMST to aflatoxins B2 and G2, via the action of several enzymes including O-methylsterigmatocystin oxidoreductase aflQ, the cytochrome P450 monooxygenase aflU, but also the NADH-dependent flavin oxidoreductase nadA which is specifically required for the synthesis of AFG1. This Aspergillus parasiticus (strain ATCC 56775 / NRRL 5862 / SRRC 143 / SU-1) protein is Fatty acid synthase alpha subunit aflA.